Consider the following 1179-residue polypeptide: ATP-dependent helicase/deoxyribonuclease subunit B (1179 aa).

This sequence belongs to the helicase family. AddB/RexB type 2 subfamily. In terms of assembly, heterodimer of AddA and RexB. Requires Mg(2+) as cofactor.

Its function is as follows. The heterodimer acts as both an ATP-dependent DNA helicase and an ATP-dependent, dual-direction single-stranded exonuclease. Recognizes the chi site generating a DNA molecule suitable for the initiation of homologous recombination. This subunit has 5' -&gt; 3' nuclease activity but not helicase activity. This chain is ATP-dependent helicase/deoxyribonuclease subunit B, found in Lacticaseibacillus paracasei (strain ATCC 334 / BCRC 17002 / CCUG 31169 / CIP 107868 / KCTC 3260 / NRRL B-441) (Lactobacillus paracasei).